The sequence spans 417 residues: Cysteate synthase (417 aa).

Lysine 102 is modified (N6-(pyridoxal phosphate)lysine). Residues asparagine 128 and threonine 380 each coordinate pyridoxal 5'-phosphate.

The protein belongs to the threonine synthase family. Cysteate synthase subfamily. In terms of assembly, homotrimer. The cofactor is pyridoxal 5'-phosphate.

It catalyses the reaction O-phospho-L-serine + sulfite + H(+) = L-cysteate + phosphate. Its pathway is cofactor biosynthesis; coenzyme M biosynthesis. Specifically catalyzes the beta-elimination of phosphate from L-phosphoserine and the beta-addition of sulfite to the dehydroalanine intermediate to produce L-cysteate. This Methanocella arvoryzae (strain DSM 22066 / NBRC 105507 / MRE50) protein is Cysteate synthase.